The following is a 259-amino-acid chain: Global transcriptional regulator CodY (259 aa).

Residues 1–155 form a GAF domain region; the sequence is MELLAKTRKL…SSTVVGMEIL (155 aa). Positions 203–222 form a DNA-binding region, H-T-H motif; it reads ASKIADRVGITRSVIVNALR. S215 is modified (phosphoserine).

It belongs to the CodY family.

Its subcellular location is the cytoplasm. DNA-binding global transcriptional regulator which is involved in the adaptive response to starvation and acts by directly or indirectly controlling the expression of numerous genes in response to nutrient availability. During rapid exponential growth, CodY is highly active and represses genes whose products allow adaptation to nutrient depletion. In Bacillus anthracis (strain A0248), this protein is Global transcriptional regulator CodY.